The sequence spans 634 residues: BTB/POZ domain-containing protein At1g03010 (634 aa).

One can recognise a BTB domain in the interval 38–103 (SDLTVQVGSS…CYGINIEINL (66 aa)). In terms of domain architecture, NPH3 spans 205–503 (DWWGKSLAVL…VQVLYFEQIR (299 aa)). Tyr-444 carries the phosphotyrosine modification. Positions 542 to 580 (RDNYASVRRENRELKLEVARMRMRLTDLEKDHISIKQEL) form a coiled coil.

Belongs to the NPH3 family.

It participates in protein modification; protein ubiquitination. In terms of biological role, may act as a substrate-specific adapter of an E3 ubiquitin-protein ligase complex (CUL3-RBX1-BTB) which mediates the ubiquitination and subsequent proteasomal degradation of target proteins. The protein is BTB/POZ domain-containing protein At1g03010 of Arabidopsis thaliana (Mouse-ear cress).